A 1142-amino-acid chain; its full sequence is Serine/threonine-protein kinase GIN4 (1142 aa).

Residues 19 to 289 enclose the Protein kinase domain; the sequence is WKLGETLGLG…TRDILKHPLL (271 aa). ATP is bound by residues 25-33 and K48; that span reads LGLGSTGKV. The active-site Proton acceptor is the D156. Disordered regions lie at residues 378 to 412 and 425 to 469; these read KKRQSISSVSVSPSKKVSTTPQRRRNRESLISVTS and ASSA…RNKR. The segment covering 382–395 has biased composition (low complexity); it reads SISSVSVSPSKKVS. S406 is subject to Phosphoserine. Residues 425–440 show a composition bias toward low complexity; it reads ASSASSSNLTTPGSSK. Over residues 441–452 the composition is skewed to basic residues; sequence RLSKNFSSKKKL. Residues 454 to 465 are compositionally biased toward polar residues; the sequence is TIVNQSSPTPAS. A phosphoserine mark is found at S465, S471, S617, S689, S719, S805, S807, and S883. Residues 676–698 form a disordered region; that stretch reads DPGIMFSSPTEEVSPVEPKRTEN. At T884 the chain carries Phosphothreonine. The disordered stretch occupies residues 903 to 1031; it reads NEAKQTDNLH…NTAIGNGSFF (129 aa). 3 stretches are compositionally biased toward basic and acidic residues: residues 923-937, 962-984, and 996-1021; these read NELRKQNSQEGDQAH, KEEKKPEQHKQEEDQEKREKVVD, and KIREKNAGSQAKDHSKDHLKEHKQDK. S930 is subject to Phosphoserine.

It belongs to the protein kinase superfamily. CAMK Ser/Thr protein kinase family. NIM1 subfamily. Component of the GIN4 complex composed of at least BNI5, CDC3, CDC10, CDC11, CDC12, GIN4, NAP1 and SHS1 which forms a ring at the bud neck.

The protein resides in the cytoplasm. It is found in the bud neck. It catalyses the reaction L-seryl-[protein] + ATP = O-phospho-L-seryl-[protein] + ADP + H(+). The catalysed reaction is L-threonyl-[protein] + ATP = O-phospho-L-threonyl-[protein] + ADP + H(+). Serine/threonine-protein kinase which regulates the localization and the function of the septins during mitosis. Phosphorylates SHS1. This is Serine/threonine-protein kinase GIN4 (GIN4) from Saccharomyces cerevisiae (strain ATCC 204508 / S288c) (Baker's yeast).